The primary structure comprises 912 residues: LPS-assembly protein LptD (912 aa).

A signal peptide spans 1–27 (MLYSPLYQSIRLILFGALGLSSLTVSA).

Belongs to the LptD family. Component of the lipopolysaccharide transport and assembly complex. Interacts with LptE and LptA.

It localises to the cell outer membrane. Together with LptE, is involved in the assembly of lipopolysaccharide (LPS) at the surface of the outer membrane. The protein is LPS-assembly protein LptD of Psychrobacter arcticus (strain DSM 17307 / VKM B-2377 / 273-4).